The chain runs to 1417 residues: DNA-directed RNA polymerase subunit beta' (1417 aa).

Zn(2+) contacts are provided by cysteine 68, cysteine 70, cysteine 83, and cysteine 86. Positions 458, 460, and 462 each coordinate Mg(2+). Cysteine 811, cysteine 884, cysteine 891, and cysteine 894 together coordinate Zn(2+).

Belongs to the RNA polymerase beta' chain family. The RNAP catalytic core consists of 2 alpha, 1 beta, 1 beta' and 1 omega subunit. When a sigma factor is associated with the core the holoenzyme is formed, which can initiate transcription. It depends on Mg(2+) as a cofactor. The cofactor is Zn(2+).

The enzyme catalyses RNA(n) + a ribonucleoside 5'-triphosphate = RNA(n+1) + diphosphate. Functionally, DNA-dependent RNA polymerase catalyzes the transcription of DNA into RNA using the four ribonucleoside triphosphates as substrates. The polypeptide is DNA-directed RNA polymerase subunit beta' (Francisella tularensis subsp. mediasiatica (strain FSC147)).